Consider the following 126-residue polypeptide: Small ribosomal subunit protein uS13c (126 aa).

Positions 97-126 are disordered; that stretch reads PLRGQRTRTNARTRRGGKKTVAGKKKAPRK. Basic residues predominate over residues 101–126; sequence QRTRTNARTRRGGKKTVAGKKKAPRK.

It belongs to the universal ribosomal protein uS13 family. In terms of assembly, part of the 30S ribosomal subunit.

It localises to the plastid. Its subcellular location is the chloroplast. In terms of biological role, located at the top of the head of the 30S subunit, it contacts several helices of the 16S rRNA. This is Small ribosomal subunit protein uS13c from Porphyra purpurea (Red seaweed).